Here is a 48-residue protein sequence, read N- to C-terminus: uncharacterized protein (48 aa).

The interval Met-1–Pro-48 is disordered. The span at Pro-21 to Gly-36 shows a compositional bias: low complexity. Residues Gln-37 to Pro-48 show a composition bias toward gly residues.

This is an uncharacterized protein from Dictyostelium discoideum (Social amoeba).